A 75-amino-acid chain; its full sequence is MYKLTLCILTLSFLLLSGLSNTVLARVQYESPSQRNKIGKEVWDQTLLRDLKIGASGSNSGRAPSCNNSCKPNRP.

A signal peptide spans M1–A25. The short motif at K52 to C66 is the SCOOP motif element. The segment at G54 to P75 is disordered. Residues S56–S58 carry the SxS motif essential for MIK2 binding motif. The span at S56–P75 shows a compositional bias: polar residues.

It belongs to the serine rich endogenous peptide (SCOOP) phytocytokine family. As to quaternary structure, interacts with MIK2 (via extracellular leucine-rich repeat domain); this interaction triggers the formation of complex between MIK2 and the BAK1/SERK3 and SERK4 coreceptors, and subsequent BAK1 activation by phosphorylation. Mostly expressed in roots.

The protein resides in the cell membrane. It localises to the secreted. It is found in the extracellular space. The protein localises to the apoplast. Functionally, brassicaceae-specific phytocytokine (plant endogenous peptide released into the apoplast) perceived by MIK2 in a BAK1/SERK3 and SERK4 coreceptors-dependent manner, that modulates various physiological and antimicrobial processes including growth prevention and reactive oxygen species (ROS) response regulation. Inhibits root growth. This Arabidopsis thaliana (Mouse-ear cress) protein is Serine rich endogenous peptide 20.